Consider the following 321-residue polypeptide: D-alanine--D-alanine ligase (321 aa).

Residues 121 to 315 enclose the ATP-grasp domain; sequence RSWFLTNNIN…FTNLIEEIIK (195 aa). Residue 147–199 coordinates ATP; that stretch reads PMKRPYVIKPLTQGSSIGVEVIFAEDNFNFADYDFPYGDQVIIEQYIKGRELQ. Positions 268, 282, and 284 each coordinate Mg(2+).

The protein belongs to the D-alanine--D-alanine ligase family. Mg(2+) serves as cofactor. The cofactor is Mn(2+).

The protein localises to the cytoplasm. It carries out the reaction 2 D-alanine + ATP = D-alanyl-D-alanine + ADP + phosphate + H(+). It participates in cell wall biogenesis; peptidoglycan biosynthesis. Its function is as follows. Cell wall formation. The protein is D-alanine--D-alanine ligase of Rickettsia massiliae (strain Mtu5).